The primary structure comprises 102 residues: Putative RNA-binding protein RbpA (102 aa).

One can recognise an RRM domain in the interval 2–79 (SIYVGNLSYE…RDLKVNKAKP (78 aa)). Residues 73–84 (KVNKAKPREDRG) are compositionally biased toward basic and acidic residues. The segment at 73–102 (KVNKAKPREDRGPSGGNRGGYGGGGGRNRY) is disordered. Positions 85 to 102 (PSGGNRGGYGGGGGRNRY) are enriched in gly residues.

The chain is Putative RNA-binding protein RbpA (rbpA) from Nostoc sp. (strain PCC 7120 / SAG 25.82 / UTEX 2576).